Here is a 102-residue protein sequence, read N- to C-terminus: Small ribosomal subunit protein uS10 (102 aa).

The protein belongs to the universal ribosomal protein uS10 family. In terms of assembly, part of the 30S ribosomal subunit.

Functionally, involved in the binding of tRNA to the ribosomes. The polypeptide is Small ribosomal subunit protein uS10 (Methanosphaerula palustris (strain ATCC BAA-1556 / DSM 19958 / E1-9c)).